The chain runs to 756 residues: Hyperosmolality-gated Ca2+ permeable channel 1.5 (756 aa).

The next 10 helical transmembrane spans lie at 7-27 (IGVA…AFAI), 101-121 (IYLL…TVMV), 154-174 (SRFW…CFVL), 373-393 (LVIA…IAFV), 425-445 (FLPG…LMLM), 465-485 (YYMF…TALQ), 510-530 (ATFF…GEIL), 574-594 (FILG…ILVF), 628-648 (VVIA…TKKA), and 651-671 (STPL…FCQG). The segment at 731-756 (PDKTPDLVATKRGSRRFNSGSAETFT) is disordered. The span at 746–756 (RFNSGSAETFT) shows a compositional bias: polar residues.

It belongs to the CSC1 (TC 1.A.17) family.

The protein localises to the membrane. Functionally, acts as an osmosensitive calcium-permeable cation channel. The protein is Hyperosmolality-gated Ca2+ permeable channel 1.5 of Arabidopsis thaliana (Mouse-ear cress).